Here is a 557-residue protein sequence, read N- to C-terminus: 2-succinyl-5-enolpyruvyl-6-hydroxy-3-cyclohexene-1-carboxylate synthase (557 aa).

Belongs to the TPP enzyme family. MenD subfamily. Homodimer. The cofactor is Mg(2+). Requires Mn(2+) as cofactor. It depends on thiamine diphosphate as a cofactor.

The enzyme catalyses isochorismate + 2-oxoglutarate + H(+) = 5-enolpyruvoyl-6-hydroxy-2-succinyl-cyclohex-3-ene-1-carboxylate + CO2. It participates in quinol/quinone metabolism; 1,4-dihydroxy-2-naphthoate biosynthesis; 1,4-dihydroxy-2-naphthoate from chorismate: step 2/7. The protein operates within quinol/quinone metabolism; menaquinone biosynthesis. Its function is as follows. Catalyzes the thiamine diphosphate-dependent decarboxylation of 2-oxoglutarate and the subsequent addition of the resulting succinic semialdehyde-thiamine pyrophosphate anion to isochorismate to yield 2-succinyl-5-enolpyruvyl-6-hydroxy-3-cyclohexene-1-carboxylate (SEPHCHC). The chain is 2-succinyl-5-enolpyruvyl-6-hydroxy-3-cyclohexene-1-carboxylate synthase from Staphylococcus aureus (strain Mu3 / ATCC 700698).